The following is a 227-amino-acid chain: Phosphoribosylformylglycinamidine synthase subunit PurQ (227 aa).

The Glutamine amidotransferase type-1 domain maps to 3-225; the sequence is FAVIVFPGSN…LKQWRETYVV (223 aa). Cysteine 86 acts as the Nucleophile in catalysis. Catalysis depends on residues histidine 194 and glutamate 196.

In terms of assembly, part of the FGAM synthase complex composed of 1 PurL, 1 PurQ and 2 PurS subunits.

Its subcellular location is the cytoplasm. It catalyses the reaction N(2)-formyl-N(1)-(5-phospho-beta-D-ribosyl)glycinamide + L-glutamine + ATP + H2O = 2-formamido-N(1)-(5-O-phospho-beta-D-ribosyl)acetamidine + L-glutamate + ADP + phosphate + H(+). The enzyme catalyses L-glutamine + H2O = L-glutamate + NH4(+). It participates in purine metabolism; IMP biosynthesis via de novo pathway; 5-amino-1-(5-phospho-D-ribosyl)imidazole from N(2)-formyl-N(1)-(5-phospho-D-ribosyl)glycinamide: step 1/2. Functionally, part of the phosphoribosylformylglycinamidine synthase complex involved in the purines biosynthetic pathway. Catalyzes the ATP-dependent conversion of formylglycinamide ribonucleotide (FGAR) and glutamine to yield formylglycinamidine ribonucleotide (FGAM) and glutamate. The FGAM synthase complex is composed of three subunits. PurQ produces an ammonia molecule by converting glutamine to glutamate. PurL transfers the ammonia molecule to FGAR to form FGAM in an ATP-dependent manner. PurS interacts with PurQ and PurL and is thought to assist in the transfer of the ammonia molecule from PurQ to PurL. In Bacillus mycoides (strain KBAB4) (Bacillus weihenstephanensis), this protein is Phosphoribosylformylglycinamidine synthase subunit PurQ.